The sequence spans 365 residues: 3-amino-4-hydroxybenzoate 4-O-methyltransferase (365 aa).

Polar residues predominate over residues Met1–Thr18. Residues Met1–Asp32 form a disordered region. S-adenosyl-L-methionine-binding positions include Asp227, Gly253 to Phe255, and Arg270. His273 acts as the Proton acceptor in catalysis.

It belongs to the class I-like SAM-binding methyltransferase superfamily. Cation-independent O-methyltransferase family.

It catalyses the reaction 3-amino-2,4-dihydroxybenzoate + S-adenosyl-L-methionine = 3-amino-2-hydroxy-4-methoxybenzoate + S-adenosyl-L-homocysteine + H(+). The protein operates within antibiotic biosynthesis. Its function is as follows. Part of a gene cluster involved in the biosynthesis of cremeomycin, a light-sensitive o-diazoquinone with antibacterial and antiproliferative effects. Catalyzes the methylation of the C4 hydroxyl group of 3-amino-2,4-dihydroxybenzoate (3,2,4-ADHBA) to form 3-amino-2-hydroxy-4-methoxybenzoate (3,2,4-AHMBA). In vitro, can also catalyze the methylation of 3-amino-4-hydroxybenzoate (3,4-AHBA). This Streptomyces cremeus protein is 3-amino-4-hydroxybenzoate 4-O-methyltransferase.